The primary structure comprises 409 residues: MARAKFERTKPHVNIGTIGHVDHGKTTLTAAITMTLAALGQAVAKGYDQIDNAPEEKARGITINTAHVEYETANRHYAHVDCPGHADYVKNMITGAAQMDGAILVVAATDGPMPQTREHILLAKQVGVPKLVVFLNKEDMMEDAELLELVELELRELLTEYEFDGDDIPIVRGSGLQALDVMTKNPKTQRGENPWVDKIYELMDAVDSYIPDPERDIDKPFLMAVEDVFSITGRGTVATGRIERGKVKVGDVVELVGIRDTRNTTVTGIEMFKKSLDEGMAGDNAGVLLRGIQKTDIERGMVLAKPGSITPHTQFEGEVYVLTEKEGGRKTPFFAGYRPQFYVRTTDVTGTIKAFTSDEGEAVEMVMPGDRIKVTVELINPIAIEQGMRFAIREGGRTIGAGVVSKIVK.

A tr-type G domain is found at 10–214; sequence KPHVNIGTIG…AVDSYIPDPE (205 aa). The interval 19–26 is G1; it reads GHVDHGKT. 19-26 is a GTP binding site; the sequence is GHVDHGKT. Mg(2+) is bound at residue threonine 26. Positions 60-64 are G2; sequence GITIN. The interval 81–84 is G3; sequence DCPG. GTP is bound by residues 81–85 and 136–139; these read DCPGH and NKED. A G4 region spans residues 136 to 139; it reads NKED. Residues 174–176 are G5; sequence SGL.

Belongs to the TRAFAC class translation factor GTPase superfamily. Classic translation factor GTPase family. EF-Tu/EF-1A subfamily. Monomer.

Its subcellular location is the cytoplasm. It carries out the reaction GTP + H2O = GDP + phosphate + H(+). Its function is as follows. GTP hydrolase that promotes the GTP-dependent binding of aminoacyl-tRNA to the A-site of ribosomes during protein biosynthesis. In Trichormus variabilis (strain ATCC 29413 / PCC 7937) (Anabaena variabilis), this protein is Elongation factor Tu.